A 254-amino-acid polypeptide reads, in one-letter code: Alcohol dehydrogenase (254 aa).

Residue 10–33 (FVAGLGGIGFDTSREIVKSGPKNL) coordinates NAD(+). Ser-138 contacts substrate. The Proton acceptor role is filled by Tyr-151.

It belongs to the short-chain dehydrogenases/reductases (SDR) family. In terms of assembly, homodimer.

It carries out the reaction a primary alcohol + NAD(+) = an aldehyde + NADH + H(+). The catalysed reaction is a secondary alcohol + NAD(+) = a ketone + NADH + H(+). This Drosophila mayaguana (Fruit fly) protein is Alcohol dehydrogenase (Adh).